The chain runs to 205 residues: Recombination protein RecR (205 aa).

The C4-type zinc-finger motif lies at 59–74 (CAMCNTFCEGGLCDIC). Positions 82–177 (RRLMVVHMPA…KVSRLSQGIP (96 aa)) constitute a Toprim domain.

Belongs to the RecR family.

Its function is as follows. May play a role in DNA repair. It seems to be involved in an RecBC-independent recombinational process of DNA repair. It may act with RecF and RecO. The sequence is that of Recombination protein RecR from Neisseria meningitidis serogroup C (strain 053442).